The following is a 126-amino-acid chain: Small ribosomal subunit protein uS12 (126 aa).

The disordered stretch occupies residues 1–26 (MPTINQLVRKGRASETTKSKSPALQD). 3-methylthioaspartic acid is present on Asp89. The segment at 102–126 (LDTQGVKDRRQARSKYGAKRAKAAK) is disordered. The segment covering 113–126 (ARSKYGAKRAKAAK) has biased composition (basic residues).

The protein belongs to the universal ribosomal protein uS12 family. In terms of assembly, part of the 30S ribosomal subunit. Contacts proteins S8 and S17. May interact with IF1 in the 30S initiation complex.

Functionally, with S4 and S5 plays an important role in translational accuracy. Interacts with and stabilizes bases of the 16S rRNA that are involved in tRNA selection in the A site and with the mRNA backbone. Located at the interface of the 30S and 50S subunits, it traverses the body of the 30S subunit contacting proteins on the other side and probably holding the rRNA structure together. The combined cluster of proteins S8, S12 and S17 appears to hold together the shoulder and platform of the 30S subunit. The chain is Small ribosomal subunit protein uS12 from Burkholderia mallei (strain ATCC 23344).